Here is a 537-residue protein sequence, read N- to C-terminus: Zinc finger protein 703 (537 aa).

Disordered regions lie at residues 1–38, 90–254, and 300–323; these read MNCS…LRQA, SQIG…VAPV, and VGNQ…LTGA. Positions 101–111 are enriched in polar residues; the sequence is SKLNSVTSSGL. Positions 149–158 are enriched in low complexity; that stretch reads GSSSGGAADK. The segment covering 176 to 185 has biased composition (polar residues); it reads SPSSRVSSPG. A compositionally biased stretch (basic and acidic residues) spans 188 to 203; the sequence is CDSKNNESQEKKEPEA. A compositionally biased stretch (polar residues) spans 205 to 220; it reads KANSETSQVNPTLTRA. The segment covering 221-232 has biased composition (low complexity); the sequence is STSNSSAESSQS. A C2H2-type zinc finger spans residues 409–437; that stretch reads HICNWVSASGPCDKRFSTSEELLAHLRTH.

Belongs to the Elbow/Noc family.

The protein resides in the nucleus. Its subcellular location is the cytoplasm. Its function is as follows. Transcriptional corepressor which does not bind directly to DNA and may regulate transcription through recruitment of histone deacetylases to gene promoters. Regulates cell adhesion, migration and proliferation. Involved in specification of the lateral neural plate border (NPB). May be required for segmental gene expression during hindbrain development. This chain is Zinc finger protein 703 (znf703), found in Xenopus tropicalis (Western clawed frog).